Here is a 137-residue protein sequence, read N- to C-terminus: uncharacterized protein (137 aa).

3 helical membrane passes run 5–25 (ELLWPALITALATMLYLVLVI), 79–99 (IAAILGAVWLLGRILYAWGYY), and 109–129 (FALGSLSSMILVVGALLSILW).

It belongs to the MAPEG family.

The protein resides in the cell membrane. This is an uncharacterized protein from Synechocystis sp. (strain ATCC 27184 / PCC 6803 / Kazusa).